We begin with the raw amino-acid sequence, 90 residues long: Putative ATPase inhibitor, mitochondrial (90 aa).

Residues 42 to 89 adopt a coiled-coil conformation; that stretch reads ESREKAKEDFFVHQHEIEQLRKLKESLKLHREELDELESRVDKKMKSN.

Belongs to the ATPase inhibitor family.

It localises to the mitochondrion. Forms a one-to-one complex with ATPase to inhibit the enzyme activity completely. In Schizosaccharomyces pombe (strain 972 / ATCC 24843) (Fission yeast), this protein is Putative ATPase inhibitor, mitochondrial (inh1).